Reading from the N-terminus, the 168-residue chain is Crossover junction endodeoxyribonuclease RuvC (168 aa).

Residues Asp7, Glu66, and Asp138 contribute to the active site. Residues Asp7, Glu66, and Asp138 each contribute to the Mg(2+) site.

Belongs to the RuvC family. Homodimer which binds Holliday junction (HJ) DNA. The HJ becomes 2-fold symmetrical on binding to RuvC with unstacked arms; it has a different conformation from HJ DNA in complex with RuvA. In the full resolvosome a probable DNA-RuvA(4)-RuvB(12)-RuvC(2) complex forms which resolves the HJ. Mg(2+) serves as cofactor.

The protein localises to the cytoplasm. The enzyme catalyses Endonucleolytic cleavage at a junction such as a reciprocal single-stranded crossover between two homologous DNA duplexes (Holliday junction).. In terms of biological role, the RuvA-RuvB-RuvC complex processes Holliday junction (HJ) DNA during genetic recombination and DNA repair. Endonuclease that resolves HJ intermediates. Cleaves cruciform DNA by making single-stranded nicks across the HJ at symmetrical positions within the homologous arms, yielding a 5'-phosphate and a 3'-hydroxyl group; requires a central core of homology in the junction. The consensus cleavage sequence is 5'-(A/T)TT(C/G)-3'. Cleavage occurs on the 3'-side of the TT dinucleotide at the point of strand exchange. HJ branch migration catalyzed by RuvA-RuvB allows RuvC to scan DNA until it finds its consensus sequence, where it cleaves and resolves the cruciform DNA. The protein is Crossover junction endodeoxyribonuclease RuvC of Cereibacter sphaeroides (strain ATCC 17023 / DSM 158 / JCM 6121 / CCUG 31486 / LMG 2827 / NBRC 12203 / NCIMB 8253 / ATH 2.4.1.) (Rhodobacter sphaeroides).